Here is a 377-residue protein sequence, read N- to C-terminus: tRNA(Met) cytidine acetate ligase (377 aa).

ATP is bound by residues 7-20, Gly100, Asn153, and Arg178; that span reads VTEY…HLYH.

This sequence belongs to the TmcAL family.

Its subcellular location is the cytoplasm. The catalysed reaction is cytidine(34) in elongator tRNA(Met) + acetate + ATP = N(4)-acetylcytidine(34) in elongator tRNA(Met) + AMP + diphosphate. Functionally, catalyzes the formation of N(4)-acetylcytidine (ac(4)C) at the wobble position of elongator tRNA(Met), using acetate and ATP as substrates. First activates an acetate ion to form acetyladenylate (Ac-AMP) and then transfers the acetyl group to tRNA to form ac(4)C34. This is tRNA(Met) cytidine acetate ligase from Staphylococcus saprophyticus subsp. saprophyticus (strain ATCC 15305 / DSM 20229 / NCIMB 8711 / NCTC 7292 / S-41).